Here is a 452-residue protein sequence, read N- to C-terminus: tRNA modification GTPase MnmE (452 aa).

Residues Arg21, Glu82, and Arg121 each coordinate (6S)-5-formyl-5,6,7,8-tetrahydrofolate. Residues 217–373 (GINTTIIGKP…LENKIIEMFN (157 aa)) form the TrmE-type G domain. Residue Asn227 coordinates K(+). GTP contacts are provided by residues 227-232 (NVGKSS), 246-252 (TDIPGTT), and 271-274 (DTAG). Ser231 provides a ligand contact to Mg(2+). K(+)-binding residues include Thr246, Ile248, and Thr251. Position 252 (Thr252) interacts with Mg(2+). Lys452 lines the (6S)-5-formyl-5,6,7,8-tetrahydrofolate pocket.

This sequence belongs to the TRAFAC class TrmE-Era-EngA-EngB-Septin-like GTPase superfamily. TrmE GTPase family. In terms of assembly, homodimer. Heterotetramer of two MnmE and two MnmG subunits. K(+) serves as cofactor.

It is found in the cytoplasm. Its function is as follows. Exhibits a very high intrinsic GTPase hydrolysis rate. Involved in the addition of a carboxymethylaminomethyl (cmnm) group at the wobble position (U34) of certain tRNAs, forming tRNA-cmnm(5)s(2)U34. The chain is tRNA modification GTPase MnmE from Finegoldia magna (strain ATCC 29328 / DSM 20472 / WAL 2508) (Peptostreptococcus magnus).